Reading from the N-terminus, the 242-residue chain is Probable transcriptional regulatory protein lhv_0777 (242 aa).

Residues 1–22 (MSGHSKWHNIQGRKNAQDAKRG) are disordered.

This sequence belongs to the TACO1 family.

It localises to the cytoplasm. This is Probable transcriptional regulatory protein lhv_0777 from Lactobacillus helveticus (strain DPC 4571).